Consider the following 688-residue polypeptide: MSPLDQKNKPRGGADDLPPEIDLEDEALEEIVEPTGPDVAFTAIDWTPHAGDAEGMVGAEVIQTLVKRLPNAPGVYRMMNAAGDVLYVGKARSLKKRVTNYAQGRFHTNRIGRMVRETSTMEFVVTRTEIEALLLEANLIKRLRPRFNVLMRDDKSFPYILLTGDHVSPGIYKHRGARSRKGDYFGPFASAGAVGRTINSLQRAFLLRSCTNSFYENRTRPCLLYQIKRCAGPCTGEISHEGYAELVAEAKDFLSGRSQKVKTEISAAMQQASEDLDFERAAIYRDRLAALSHVQSHQGINPATVDEADVFAIHQEGGQVCIQVFFFRTGQNWGNRAYFPKADPALEAAEVLGSFLAQFYDDKPTPRNILLSRGVEDQELLGEALSTRAGRKVTISVPQRGEKKDLTDNALQNAREALGRRLAETSTQGRLLAGFAETFGLAKPPVRIEVYDNSHIMGTNAVGAMVVAGPEGFVKNQYRKFNIRSTEITPGDDFGMMREVMERRFSRLLKEHGDVAPNDAASAEAGDDIEDDISGSFPAWPDVILIDGGQGQMTAVRKILADLGIEDRVVAIGIAKGQDRDAGRERFFVKGRDSFSLPVRDPVLYFVQRLRDEVHRFAIGSHRARRKKEMVKSPLDEIAGIGPGRKRALLLAFGTAKAVSRAAIEDLRKVDGISEQVAKLVYNHFHES.

Basic and acidic residues predominate over residues 1-14; the sequence is MSPLDQKNKPRGGA. The tract at residues 1 to 20 is disordered; sequence MSPLDQKNKPRGGADDLPPE. A GIY-YIG domain is found at 71-149; that stretch reads NAPGVYRMMN…IKRLRPRFNV (79 aa). Residues 259–294 enclose the UVR domain; the sequence is QKVKTEISAAMQQASEDLDFERAAIYRDRLAALSHV.

This sequence belongs to the UvrC family. Interacts with UvrB in an incision complex.

It is found in the cytoplasm. In terms of biological role, the UvrABC repair system catalyzes the recognition and processing of DNA lesions. UvrC both incises the 5' and 3' sides of the lesion. The N-terminal half is responsible for the 3' incision and the C-terminal half is responsible for the 5' incision. This is UvrABC system protein C from Mesorhizobium japonicum (strain LMG 29417 / CECT 9101 / MAFF 303099) (Mesorhizobium loti (strain MAFF 303099)).